The following is a 415-amino-acid chain: Adenosylhomocysteinase (415 aa).

Substrate-binding residues include threonine 53, aspartate 124, and glutamate 147. An NAD(+)-binding site is contributed by 148–150 (TTT). Residues lysine 177 and aspartate 181 each contribute to the substrate site. NAD(+) is bound by residues asparagine 182, 211-216 (GYGWVG), glutamate 234, asparagine 269, 290-292 (SGH), and asparagine 337.

The protein belongs to the adenosylhomocysteinase family. NAD(+) serves as cofactor.

The protein localises to the cytoplasm. It catalyses the reaction S-adenosyl-L-homocysteine + H2O = L-homocysteine + adenosine. It functions in the pathway amino-acid biosynthesis; L-homocysteine biosynthesis; L-homocysteine from S-adenosyl-L-homocysteine: step 1/1. Its function is as follows. May play a key role in the regulation of the intracellular concentration of adenosylhomocysteine. The protein is Adenosylhomocysteinase of Sulfurisphaera tokodaii (strain DSM 16993 / JCM 10545 / NBRC 100140 / 7) (Sulfolobus tokodaii).